We begin with the raw amino-acid sequence, 275 residues long: Protein unc-50 homolog (275 aa).

Residues 1–26 (MTQYSHVKYTQSPTPSVVSGYSSASR) are compositionally biased toward polar residues. Positions 1-39 (MTQYSHVKYTQSPTPSVVSGYSSASRLHSPLPPPANHRR) are disordered. Over 1–99 (MTQYSHVKYT…TKSQFARDDP (99 aa)) the chain is Cytoplasmic. Residues 100–120 (AFLVLLVVCLCVTSLGFAYVL) traverse the membrane as a helical segment. Over 121-129 (GLSFWQSIS) the chain is Lumenal. The helical transmembrane segment at 130 to 150 (FIFYVVFVDCIFVGIIIASFF) threads the bilayer. The Cytoplasmic portion of the chain corresponds to 151–178 (WAVTNRYLRTNSLEPDIEWGYAFDVHLN). Residues 179-199 (AFFPPLMLLHFIQLFFYNWLI) form a helical membrane-spanning segment. The Lumenal segment spans residues 200–207 (SQTWFISR). Residues 208-228 (FLGNTFWLMGMGYYVYITFLG) form a helical membrane-spanning segment. The Cytoplasmic segment spans residues 229-239 (YNCIPHLKNTR). Residues 240–260 (IILIALPIIFLLFLVVTIIGW) traverse the membrane as a helical segment. Residues 261-275 (NATISFVNFYKYRVY) are Lumenal-facing.

It belongs to the unc-50 family.

The protein resides in the golgi apparatus membrane. Its function is as follows. Required for cell surface expression of acetylcholine receptors. This is Protein unc-50 homolog from Drosophila melanogaster (Fruit fly).